The chain runs to 163 residues: Ubiquitin-like protein 1-ribosomal protein eS31 fusion protein (163 aa).

The 70-residue stretch at 1–70 folds into the Ubiquitin-like domain; it reads MVFVKTLNRT…IYVNLELLGG (70 aa). A Glycyl lysine isopeptide (Gly-Lys) (interchain with K-? in acceptor proteins) cross-link involves residue Gly-70. The C4-type zinc finger occupies 115–138; that stretch reads CQQPSCGGGVFMAQHANRHYCGRC.

This sequence in the N-terminal section; belongs to the ubiquitin family. In the C-terminal section; belongs to the eukaryotic ribosomal protein eS31 family.

The chain is Ubiquitin-like protein 1-ribosomal protein eS31 fusion protein (ubl-1) from Caenorhabditis briggsae.